We begin with the raw amino-acid sequence, 706 residues long: Probable protein S-acyltransferase 20 (706 aa).

A run of 2 helical transmembrane segments spans residues 16-36 (VIAI…FAPF) and 41-61 (IWEY…FVLY). The 51-residue stretch at 172 to 222 (LFCTLCNCEVRKFSKHCRSCDKCVDCFDHHCKWLNNCVGRKNYVTFVSLMS) folds into the DHHC domain. The S-palmitoyl cysteine intermediate role is filled by C202. 2 helical membrane-spanning segments follow: residues 220 to 240 (LMSA…AVIV) and 275 to 295 (AVAI…MLLI). 3 disordered regions span residues 470–505 (SSLS…HVHE), 591–621 (LNPS…ALRD), and 680–706 (RDST…SNIK). 3 stretches are compositionally biased toward polar residues: residues 492-501 (HGMSNLSSPS), 591-603 (LNPS…TQNP), and 697-706 (ANSQTGSNIK).

Belongs to the DHHC palmitoyltransferase family.

It localises to the cell membrane. It is found in the cytoplasmic vesicle membrane. The catalysed reaction is L-cysteinyl-[protein] + hexadecanoyl-CoA = S-hexadecanoyl-L-cysteinyl-[protein] + CoA. Its function is as follows. Palmitoyl acyltransferase. The sequence is that of Probable protein S-acyltransferase 20 (PAT20) from Arabidopsis thaliana (Mouse-ear cress).